Consider the following 158-residue polypeptide: Endoribonuclease YbeY (158 aa).

Residues His-120, His-124, and His-130 each coordinate Zn(2+).

The protein belongs to the endoribonuclease YbeY family. The cofactor is Zn(2+).

It localises to the cytoplasm. In terms of biological role, single strand-specific metallo-endoribonuclease involved in late-stage 70S ribosome quality control and in maturation of the 3' terminus of the 16S rRNA. The sequence is that of Endoribonuclease YbeY from Spiroplasma citri.